The following is a 314-amino-acid chain: tRNA uridine(34) hydroxylase (314 aa).

A Rhodanese domain is found at 135–229 (ADPETLVIDT…YLEQIPAEES (95 aa)). Cys189 acts as the Cysteine persulfide intermediate in catalysis.

This sequence belongs to the TrhO family.

The catalysed reaction is uridine(34) in tRNA + AH2 + O2 = 5-hydroxyuridine(34) in tRNA + A + H2O. In terms of biological role, catalyzes oxygen-dependent 5-hydroxyuridine (ho5U) modification at position 34 in tRNAs. This chain is tRNA uridine(34) hydroxylase, found in Sinorhizobium fredii (strain NBRC 101917 / NGR234).